We begin with the raw amino-acid sequence, 503 residues long: Maturase K (503 aa).

Belongs to the intron maturase 2 family. MatK subfamily.

The protein resides in the plastid. It is found in the chloroplast. Its function is as follows. Usually encoded in the trnK tRNA gene intron. Probably assists in splicing its own and other chloroplast group II introns. The sequence is that of Maturase K from Kunzea pulchella (Red kunzea).